Consider the following 323-residue polypeptide: Oligodendrocyte transcription factor 2 (323 aa).

2 stretches are compositionally biased toward polar residues: residues Met1 to Ser13 and Lys27 to Ser45. The tract at residues Met1–Gln107 is disordered. Over residues Lys76–Ser93 the composition is skewed to low complexity. The 55-residue stretch at Gln108–Leu162 folds into the bHLH domain.

As to quaternary structure, interacts with NKX2-2. Interacts with ZNF488. In terms of tissue distribution, expressed in the brain, in oligodendrocytes. Strongly expressed in oligodendrogliomas, while expression is weak to moderate in astrocytomas. Expression in glioblastomas highly variable.

It is found in the nucleus. The protein localises to the cytoplasm. Functionally, required for oligodendrocyte and motor neuron specification in the spinal cord, as well as for the development of somatic motor neurons in the hindbrain. Functions together with ZNF488 to promote oligodendrocyte differentiation. Cooperates with OLIG1 to establish the pMN domain of the embryonic neural tube. Antagonist of V2 interneuron and of NKX2-2-induced V3 interneuron development. This is Oligodendrocyte transcription factor 2 (OLIG2) from Homo sapiens (Human).